The following is a 247-amino-acid chain: Cell division protein ZapD (247 aa).

The protein belongs to the ZapD family. Interacts with FtsZ.

The protein resides in the cytoplasm. In terms of biological role, cell division factor that enhances FtsZ-ring assembly. Directly interacts with FtsZ and promotes bundling of FtsZ protofilaments, with a reduction in FtsZ GTPase activity. The polypeptide is Cell division protein ZapD (Shigella boydii serotype 18 (strain CDC 3083-94 / BS512)).